We begin with the raw amino-acid sequence, 151 residues long: Phosphopantetheine adenylyltransferase (151 aa).

Threonine 9 lines the substrate pocket. Residues 9–10 (TF) and histidine 17 each bind ATP. Positions 41, 73, and 87 each coordinate substrate. ATP contacts are provided by residues 88–90 (GIR), glutamate 98, and 122–128 (LTSISST).

Belongs to the bacterial CoaD family. As to quaternary structure, homohexamer. Mg(2+) is required as a cofactor.

The protein localises to the cytoplasm. The catalysed reaction is (R)-4'-phosphopantetheine + ATP + H(+) = 3'-dephospho-CoA + diphosphate. The protein operates within cofactor biosynthesis; coenzyme A biosynthesis; CoA from (R)-pantothenate: step 4/5. Its function is as follows. Reversibly transfers an adenylyl group from ATP to 4'-phosphopantetheine, yielding dephospho-CoA (dPCoA) and pyrophosphate. The chain is Phosphopantetheine adenylyltransferase from Phocaeicola vulgatus (strain ATCC 8482 / DSM 1447 / JCM 5826 / CCUG 4940 / NBRC 14291 / NCTC 11154) (Bacteroides vulgatus).